The following is a 277-amino-acid chain: uncharacterized protein (277 aa).

32-39 serves as a coordination point for ATP; sequence GPQGSGKS.

This sequence belongs to the GLYK kinase family.

It localises to the cytoplasm. The protein localises to the nucleus. In terms of biological role, has a role in meiosis. This is an uncharacterized protein from Schizosaccharomyces pombe (strain 972 / ATCC 24843) (Fission yeast).